We begin with the raw amino-acid sequence, 254 residues long: DNA repair protein RecO (254 aa).

It belongs to the RecO family.

In terms of biological role, involved in DNA repair and RecF pathway recombination. The chain is DNA repair protein RecO from Anaeromyxobacter sp. (strain K).